The chain runs to 179 residues: Large ribosomal subunit protein uL5 (179 aa).

It belongs to the universal ribosomal protein uL5 family. In terms of assembly, part of the 50S ribosomal subunit; part of the 5S rRNA/L5/L18/L25 subcomplex. Contacts the 5S rRNA and the P site tRNA. Forms a bridge to the 30S subunit in the 70S ribosome.

Functionally, this is one of the proteins that bind and probably mediate the attachment of the 5S RNA into the large ribosomal subunit, where it forms part of the central protuberance. In the 70S ribosome it contacts protein S13 of the 30S subunit (bridge B1b), connecting the 2 subunits; this bridge is implicated in subunit movement. Contacts the P site tRNA; the 5S rRNA and some of its associated proteins might help stabilize positioning of ribosome-bound tRNAs. The sequence is that of Large ribosomal subunit protein uL5 from Prochlorococcus marinus (strain MIT 9301).